We begin with the raw amino-acid sequence, 329 residues long: Terpene synthase 7 (329 aa).

The DDxx(x)D/E motif motif lies at 99–104 (DDLYLE). Residues 230-238 (NDIHSFNKE) carry the NDxxSxxxD/E motif motif.

The protein belongs to the terpene synthase family.

Terpene synthase that converts its substrate farnesyl diphosphate (FPP) into 6 yet unidentified sesquiterpenes. This is Terpene synthase 7 from Dictyostelium purpureum (Slime mold).